The chain runs to 883 residues: Alanine--tRNA ligase (883 aa).

His-560, His-564, Cys-665, and His-669 together coordinate Zn(2+).

This sequence belongs to the class-II aminoacyl-tRNA synthetase family. Zn(2+) serves as cofactor.

The protein resides in the cytoplasm. It carries out the reaction tRNA(Ala) + L-alanine + ATP = L-alanyl-tRNA(Ala) + AMP + diphosphate. Its function is as follows. Catalyzes the attachment of alanine to tRNA(Ala) in a two-step reaction: alanine is first activated by ATP to form Ala-AMP and then transferred to the acceptor end of tRNA(Ala). Also edits incorrectly charged Ser-tRNA(Ala) and Gly-tRNA(Ala) via its editing domain. This is Alanine--tRNA ligase from Mesomycoplasma hyopneumoniae (strain 232) (Mycoplasma hyopneumoniae).